The following is a 368-amino-acid chain: G-protein coupled receptor 62 (368 aa).

The Extracellular segment spans residues 1 to 18 (MANSTGLNASEVAGSLGL). N-linked (GlcNAc...) asparagine glycans are attached at residues asparagine 3 and asparagine 8. Residues 19 to 39 (ILAAVVEVGALLGNGALLVVV) form a helical membrane-spanning segment. The Cytoplasmic segment spans residues 40–53 (LRTPGLRDALYLAH). Residues 54–74 (LCVVDLLAAASIMPLGLLAAP) form a helical membrane-spanning segment. The Extracellular portion of the chain corresponds to 75–91 (PPGLGRVRLGPAPCRAA). Residues 92-112 (RFLSAALLPACTLGVAALGLA) form a helical membrane-spanning segment. Residues 113 to 129 (RYRLIVHPLRPGSRPPP) are Cytoplasmic-facing. The helical transmembrane segment at 130 to 150 (VLVLTAVWAAAGLLGALSLLG) threads the bilayer. The Extracellular segment spans residues 151-177 (TPPAPPPAPARCSVLAGGLGPFRPLWA). The helical transmembrane segment at 178–198 (LLAFALPALLLLGAYGGIFVV) threads the bilayer. Residues 199–239 (ARRAALRPPRPARGSRLHSDSLDSRLSILPPLRPRLPGGKA) are Cytoplasmic-facing. A helical membrane pass occupies residues 240 to 260 (ALAPALAVGQFAACWLPYGCA). Residues 261–272 (CLAPAARAAEAE) are Extracellular-facing. Residues 273–293 (AAVTWVAYSAFAAHPFLYGLL) form a helical membrane-spanning segment. Residues 294 to 368 (QRPVRLALGR…YQGPPESSLS (75 aa)) are Cytoplasmic-facing. The tract at residues 332-368 (RPPEGPAVGPSEAPEQTPELAGGRSPAYQGPPESSLS) is disordered.

It belongs to the G-protein coupled receptor 1 family. As to quaternary structure, homodimers. Forms heterodimer with MTNR1B. Interacts with ARRB1 and ARRB2 in a spontaneous and agonist-independent manner; leading to the internalization of GPR62 in the endosomal compartment. As to expression, expressed in brain; detected in the basal forebrain, frontal cortex, caudate, putamen, thalamus and hippocampus.

It is found in the cell membrane. It localises to the endosome membrane. Orphan G-protein coupled receptor. Constitutively activates the G(q/11)/inositol phosphate and the G(s)-alpha/cAMP signaling pathways. Has spontaneous activity for beta-arrestin recruitment. Shows a reciprocal modulation of signaling functions with the melatonin receptor MTNR1B most likely through receptor heteromerization. The sequence is that of G-protein coupled receptor 62 (GPR62) from Homo sapiens (Human).